A 185-amino-acid polypeptide reads, in one-letter code: ATP synthase subunit delta, chloroplastic (185 aa).

It belongs to the ATPase delta chain family. F-type ATPases have 2 components, F(1) - the catalytic core - and F(0) - the membrane proton channel. F(1) has five subunits: alpha(3), beta(3), gamma(1), delta(1), epsilon(1). CF(0) has four main subunits: a(1), b(1), b'(1) and c(10-14). The alpha and beta chains form an alternating ring which encloses part of the gamma chain. F(1) is attached to F(0) by a central stalk formed by the gamma and epsilon chains, while a peripheral stalk is formed by the delta, b and b' chains.

The protein localises to the plastid. It localises to the chloroplast thylakoid membrane. Its function is as follows. F(1)F(0) ATP synthase produces ATP from ADP in the presence of a proton or sodium gradient. F-type ATPases consist of two structural domains, F(1) containing the extramembraneous catalytic core and F(0) containing the membrane proton channel, linked together by a central stalk and a peripheral stalk. During catalysis, ATP synthesis in the catalytic domain of F(1) is coupled via a rotary mechanism of the central stalk subunits to proton translocation. In terms of biological role, this protein is part of the stalk that links CF(0) to CF(1). It either transmits conformational changes from CF(0) to CF(1) or is implicated in proton conduction. In Gracilaria tenuistipitata var. liui (Red alga), this protein is ATP synthase subunit delta, chloroplastic.